The primary structure comprises 357 residues: UDP-N-acetylglucosamine--N-acetylmuramyl-(pentapeptide) pyrophosphoryl-undecaprenol N-acetylglucosamine transferase (357 aa).

UDP-N-acetyl-alpha-D-glucosamine contacts are provided by residues 13–15, arginine 166, serine 196, and glutamine 291; that span reads SAG.

This sequence belongs to the glycosyltransferase 28 family. MurG subfamily.

It is found in the cell membrane. The enzyme catalyses di-trans,octa-cis-undecaprenyl diphospho-N-acetyl-alpha-D-muramoyl-L-alanyl-D-glutamyl-meso-2,6-diaminopimeloyl-D-alanyl-D-alanine + UDP-N-acetyl-alpha-D-glucosamine = di-trans,octa-cis-undecaprenyl diphospho-[N-acetyl-alpha-D-glucosaminyl-(1-&gt;4)]-N-acetyl-alpha-D-muramoyl-L-alanyl-D-glutamyl-meso-2,6-diaminopimeloyl-D-alanyl-D-alanine + UDP + H(+). It participates in cell wall biogenesis; peptidoglycan biosynthesis. Functionally, cell wall formation. Catalyzes the transfer of a GlcNAc subunit on undecaprenyl-pyrophosphoryl-MurNAc-pentapeptide (lipid intermediate I) to form undecaprenyl-pyrophosphoryl-MurNAc-(pentapeptide)GlcNAc (lipid intermediate II). This Clostridium perfringens (strain SM101 / Type A) protein is UDP-N-acetylglucosamine--N-acetylmuramyl-(pentapeptide) pyrophosphoryl-undecaprenol N-acetylglucosamine transferase.